Reading from the N-terminus, the 91-residue chain is Small ribosomal subunit protein bS18 (91 aa).

This sequence belongs to the bacterial ribosomal protein bS18 family. Part of the 30S ribosomal subunit. Forms a tight heterodimer with protein bS6.

Binds as a heterodimer with protein bS6 to the central domain of the 16S rRNA, where it helps stabilize the platform of the 30S subunit. The sequence is that of Small ribosomal subunit protein bS18 from Wolbachia sp. subsp. Brugia malayi (strain TRS).